The chain runs to 370 residues: 3-dehydroquinate synthase (370 aa).

NAD(+) contacts are provided by residues 108 to 112 (GVIGD), 132 to 133 (TT), lysine 145, and lysine 154. The Zn(2+) site is built by glutamate 187, histidine 249, and histidine 267.

The protein belongs to the sugar phosphate cyclases superfamily. Dehydroquinate synthase family. The cofactor is Co(2+). Zn(2+) serves as cofactor. Requires NAD(+) as cofactor.

Its subcellular location is the cytoplasm. It catalyses the reaction 7-phospho-2-dehydro-3-deoxy-D-arabino-heptonate = 3-dehydroquinate + phosphate. The protein operates within metabolic intermediate biosynthesis; chorismate biosynthesis; chorismate from D-erythrose 4-phosphate and phosphoenolpyruvate: step 2/7. Functionally, catalyzes the conversion of 3-deoxy-D-arabino-heptulosonate 7-phosphate (DAHP) to dehydroquinate (DHQ). The chain is 3-dehydroquinate synthase from Cereibacter sphaeroides (strain ATCC 17025 / ATH 2.4.3) (Rhodobacter sphaeroides).